A 2294-amino-acid chain; its full sequence is Reducing polyketide synthase BOA9 (2294 aa).

One can recognise a Ketosynthase family 3 (KS3) domain in the interval 4–409; that stretch reads PEPVAIIGMG…GANATAIVEA (406 aa). Positions 537–853 are malonyl-CoA:ACP transacylase (MAT) domain; sequence IFTGQGAQNA…DYAATLVRGQ (317 aa). The For malonyltransferase activity role is filled by Ser630. The segment at 930 to 1067 is N-terminal hotdog fold; that stretch reads HDLLGAILPG…GTVTKKKAVT (138 aa). The interval 930–1104 is dehydratase (DH) domain; that stretch reads HDLLGAILPG…LNYGPAFNGL (175 aa). The PKS/mFAS DH domain occupies 930–1236; sequence HDLLGAILPG…CTQYSEALDD (307 aa). The Proton acceptor; for dehydratase activity role is filled by His962. Positions 1078-1236 are C-terminal hotdog fold; it reads QEPKAARTWY…CTQYSEALDD (159 aa). Asp1142 (proton donor; for dehydratase activity) is an active-site residue. The interval 1618 to 1908 is enoyl reductase (ER) domain; sequence GIFDTIHFKD…KNSRIGRVVV (291 aa). The segment at 1934 to 2107 is ketoreductase (KR) domain; the sequence is VHTYLLGVLE…LPATTISLTV (174 aa). Residues 2214–2292 form the Carrier domain; the sequence is LLLPDILEMI…SLAKKIYDIR (79 aa). At Ser2251 the chain carries O-(pantetheine 4'-phosphoryl)serine.

It functions in the pathway polyketide biosynthesis. In terms of biological role, reducing polyketide synthase; part of the gene cluster B that mediates the biosynthesis of botcinic acid and its botcinin derivatives, acetate-derived polyketides that contribute to virulence when combined with the sesquiterpene botrydial. Botcinic acid and its derivatives have been shown to induce chlorosis and necrosis during host plant infection, but also have antifungal activities. Two polyketide synthases, BOA6 and BOA9, are involved in the biosynthesis of botcinins. BOA6 mediates the formation of the per-methylated tetraketide core by condensation of four units of malonyl-CoA with one unit of acetyl-CoA, which would be methylated in activated methylene groups to yield a bicyclic acid intermediate that could then either be converted to botrylactone derivatives or lose the starter acetate unit through a retro-Claisen type C-C bond cleavage to yield botcinin derivatives. The second polyketide synthase, BOA9, is probably required for the biosynthesis of the tetraketide side chain of botcinins. The methyltransferase (MT) domain within BOA6 is probably responsible for the incorporation of four methyl groups. The trans-enoyl reductase BOA5 might take over the enoyl reductase function of BOA6 that misses an ER domain. The monooxygenases BOA2, BOA3 and BOA4 might be involved in further hydroxylations at C4, C5 and C8, whereas BOA7, close to BOA9, could potentially be involved in the hydroxylation at C4 in the side chain of botcinins. This chain is Reducing polyketide synthase BOA9, found in Botryotinia fuckeliana (strain B05.10) (Noble rot fungus).